The following is a 219-amino-acid chain: NAD(P)H-quinone oxidoreductase subunit I (219 aa).

4Fe-4S ferredoxin-type domains are found at residues Gly-55 to Val-84 and Arg-95 to Glu-124. Residues Cys-64, Cys-67, Cys-70, Cys-74, Cys-104, Cys-107, Cys-110, and Cys-114 each coordinate [4Fe-4S] cluster.

It belongs to the complex I 23 kDa subunit family. NDH-1 is composed of at least 11 different subunits. It depends on [4Fe-4S] cluster as a cofactor.

It localises to the cellular thylakoid membrane. It carries out the reaction a plastoquinone + NADH + (n+1) H(+)(in) = a plastoquinol + NAD(+) + n H(+)(out). It catalyses the reaction a plastoquinone + NADPH + (n+1) H(+)(in) = a plastoquinol + NADP(+) + n H(+)(out). Functionally, NDH-1 shuttles electrons from an unknown electron donor, via FMN and iron-sulfur (Fe-S) centers, to quinones in the respiratory and/or the photosynthetic chain. The immediate electron acceptor for the enzyme in this species is believed to be plastoquinone. Couples the redox reaction to proton translocation, and thus conserves the redox energy in a proton gradient. The chain is NAD(P)H-quinone oxidoreductase subunit I from Prochlorococcus marinus (strain SARG / CCMP1375 / SS120).